Here is a 500-residue protein sequence, read N- to C-terminus: Inner membrane transporter YjeM (500 aa).

Residues 1 to 10 (MTHTIKKMSL) are Cytoplasmic-facing. A helical membrane pass occupies residues 11 to 31 (IGLILMIFTSVFGFANSPSAF). Over 32 to 37 (YLMGYS) the chain is Periplasmic. Residues 38–58 (AIPWYIFSALLFFIPFALMMA) form a helical membrane-spanning segment. Residues 59-83 (EMGSAYRKEEGGIYSWMNNSVGPRY) lie on the Cytoplasmic side of the membrane. A helical transmembrane segment spans residues 84 to 104 (AFIGTFMWFSSYVIWMVSTAA). Topologically, residues 105-124 (KIWVPFSTFVFGADMTQHWR) are periplasmic. Residues 125-145 (IAGLEPTQVVGLLAVGWMILV) form a helical membrane-spanning segment. At 146–163 (TCVAARGINKIARITAVG) the chain is on the cytoplasmic side. A helical transmembrane segment spans residues 164–184 (GIAVMCLNLVLLLVSVAILLL). Topologically, residues 185 to 209 (NGGHFAQEINFTSSPNPGYHSGLAM) are periplasmic. The chain crosses the membrane as a helical span at residues 210 to 230 (LSFVVFAIFAYGGIEAVGGLV). Residues 231–243 (DKTEKPEKNFAKG) lie on the Cytoplasmic side of the membrane. Residues 244-264 (IVFAAIVISIGYSLAIFLWGV) form a helical membrane-spanning segment. The Periplasmic segment spans residues 265–308 (STNWQQILSNSAVNLGNITYILMSSLGTTLGNALNLSPEAAMTV). A helical transmembrane segment spans residues 309–329 (GVWFARITGLSMFLAYTGAFF). Residues 330-361 (TLSYSPLKAIIQGTPKALWPAPMTTLNANGMP) are Cytoplasmic-facing. Residues 362–382 (ATAMWLQCVLVSLFILLVSFG) form a helical membrane-spanning segment. Topologically, residues 383–394 (GDTASAFYNKLT) are periplasmic. A helical transmembrane segment spans residues 395-415 (LMANVSMTLPYLFLALAFPFF). Residues 416–433 (KARQDLERPFVLFKTKAS) are Cytoplasmic-facing. Residues 434 to 454 (TLVATGVVVLVVTFANVFTII) traverse the membrane as a helical segment. Over 455–462 (QPVIEAGD) the chain is Periplasmic. Residues 463 to 483 (WDSALWMIGGPIFFSLLAMAI) form a helical membrane-spanning segment. The Cytoplasmic segment spans residues 484–500 (YQNYSSRMSADPEWAAE).

Belongs to the amino acid-polyamine-organocation (APC) superfamily.

It localises to the cell inner membrane. The chain is Inner membrane transporter YjeM (yjeM) from Salmonella typhi.